The primary structure comprises 518 residues: MDEYSSIYSQPKTPRLKQEGFPDSIGDQHEKALIDENGEEDKKMASTEGTTGDSRSTPLTVSIPTFENVQALPTPMTYTPLSPGNLSMSPIDQSSLNIPKRRSHARLLDDMLSVTQPNQRVVSELIAPANLSPQRVVSLPTVTEEALVNDSVDSDNYTKEPYFPESSSSTEKCDDDIFQGFLLDHWDRPLLWKKVRPIGSGNFSTVLLYELMDQSNPKLKQVAVKRLKYPEELSNVEQINTSLRYKETLSRLENSLTRELQVLKSLNHPCIVKLLGINNPIFVTSKKPLCDLIIKTPRALPPCDMIMSYCPAGDLLAAVMARNGRLEAWLIQRIFTEVVLAVKYLHENSIIHRDLKLENILLKYSFDDINSFRDSPIYCKQNFIELADFGLCKKIENNEMCTARCGSEDYVSPEILMGVPYDGHLSDTWALGVILYSLFEDRLPFDPPPNASARQRSRATSHRIARFDWRWYRLSDYKTNVGKQIVENTLTRKNQRWSINEIYESPFVKTIADTLSFS.

Position 1 is an N-acetylmethionine (M1). The segment covering 1–12 has biased composition (polar residues); the sequence is MDEYSSIYSQPK. The tract at residues 1 to 59 is disordered; it reads MDEYSSIYSQPKTPRLKQEGFPDSIGDQHEKALIDENGEEDKKMASTEGTTGDSRSTPL. The segment covering 16–45 has biased composition (basic and acidic residues); that stretch reads LKQEGFPDSIGDQHEKALIDENGEEDKKMA. Over residues 47-59 the composition is skewed to polar residues; the sequence is TEGTTGDSRSTPL. S132 is subject to Phosphoserine. One can recognise a Protein kinase domain in the interval 192 to 508; it reads WKKVRPIGSG…INEIYESPFV (317 aa). ATP-binding positions include 198–206 and K225; that span reads IGSGNFSTV. D354 acts as the Proton acceptor in catalysis.

It belongs to the protein kinase superfamily. CAMK Ser/Thr protein kinase family. NIM1 subfamily.

The protein localises to the cytoplasm. The catalysed reaction is L-seryl-[protein] + ATP = O-phospho-L-seryl-[protein] + ADP + H(+). The enzyme catalyses L-threonyl-[protein] + ATP = O-phospho-L-threonyl-[protein] + ADP + H(+). Protein kinase that functions as a regulator in the pheromone-induced mating pathway downstream of mitogen-activated protein kinase (MAPK) FUS3. Diminishes transcriptional induction of genes in response to pheromone signaling. In Saccharomyces cerevisiae (strain ATCC 204508 / S288c) (Baker's yeast), this protein is Serine/threonine-protein kinase PRR1 (PRR1).